We begin with the raw amino-acid sequence, 323 residues long: Vertebrate ancient opsin (323 aa).

The Extracellular segment spans residues 1–38 (MDTLRIAVNGVSYNEASEIYKPHADPFTGPITNLAPWN). Residues 39 to 63 (FAVLATLMFVITSLSLFENFTVMLA) form a helical membrane-spanning segment. Residues 64 to 75 (TYKFKQLRQPLN) lie on the Cytoplasmic side of the membrane. A helical membrane pass occupies residues 76-100 (YIIVNLSLADFLVSLTGGTISFLTN). The Extracellular segment spans residues 101-115 (ARGYFFLGNWACVLE). A disulfide bond links cysteine 112 and cysteine 189. A helical transmembrane segment spans residues 116–135 (GFAVTYFGIVAMWSLAVLSF). The Cytoplasmic segment spans residues 136 to 154 (ERYFVICRPLGNVRLRGKH). The helical transmembrane segment at 155–178 (AALGLLFVWTFSFIWTIPPVFGWC) threads the bilayer. Residues 179 to 202 (SYTVSKIGTTCEPNWYSNNIWNHT) lie on the Extracellular side of the membrane. A glycan (N-linked (GlcNAc...) asparagine) is linked at asparagine 200. A helical transmembrane segment spans residues 203-230 (YIITFFVTCFIMPLGMIIYCYGKLLQKL). Residues 231 to 250 (RKVSHDRLGNAKKPERQVSR) are Cytoplasmic-facing. The chain crosses the membrane as a helical span at residues 251–274 (MVVVMIVAYLVGWTPYAAFSIIVT). The Extracellular portion of the chain corresponds to 275–282 (ACPTIYLD). Residues 283 to 307 (PRLAAAPAFFSKTAAVYNPVIYVFM) form a helical membrane-spanning segment. Lysine 294 carries the post-translational modification N6-(retinylidene)lysine. Topologically, residues 308–323 (NKQVSTQLNWGFWSRA) are cytoplasmic.

The protein belongs to the G-protein coupled receptor 1 family. Opsin subfamily. In terms of processing, phosphorylated on some or all of the serine and threonine residues present in the C-terminal region.

The protein localises to the membrane. This chain is Vertebrate ancient opsin, found in Salmo salar (Atlantic salmon).